A 458-amino-acid chain; its full sequence is MALWGGRFKQEADAKFKFFNDSLRFDYRLALQDIDGSIGWAKAITSVGILTEQEHQQLVVALKELRAEIESNIAIILRDDAEDIHSWVESKLIEKVGDLGKKLHTGRSRNDQVAVDMKMWCKVQAVVLQERIRNLQHKLVETAEANQNAVMPGYTHLQRAQPITFAHWCMAYYEMLERDFSRLTDAYKRMHTCPLGSGALAGTAYSIDRDALAQDLGFAIGTRNSLDSVSDRDHVLELLSTASISMVHLSRFAEDLIFFNSGESAFLELSDRVTSGSSLMPQKKNPDACELIRGKSGRVFGALSGLLTTLKGLPLAYNKDMQEDKEGIFDAMETWQACLEIGALVLEDINVNVERTREAAQQGYSNATELADYLVAKGIPFREAHHIVGEAVVYAISKREPLEALSVAEFKQFHPVIDEDVYPILSLESCLEKRSAKGGVNPERVREAIEAAKVNLGA.

Belongs to the lyase 1 family. Argininosuccinate lyase subfamily.

It localises to the cytoplasm. It catalyses the reaction 2-(N(omega)-L-arginino)succinate = fumarate + L-arginine. The protein operates within amino-acid biosynthesis; L-arginine biosynthesis; L-arginine from L-ornithine and carbamoyl phosphate: step 3/3. This is Argininosuccinate lyase from Actinobacillus pleuropneumoniae serotype 5b (strain L20).